Consider the following 888-residue polypeptide: Prodigiosin synthesizing transferase PigC (888 aa).

Belongs to the PigC family.

Its pathway is antibiotic biosynthesis; prodigiosin biosynthesis. Involved in the biosynthesis of 2-methyl-3-n-amyl-pyrrole (MAP), one of the terminal products involved in the biosynthesis of the red antibiotic prodigiosin (Pig). Catalyzes the transfer of 2-methyl-3-n-amyl-pyrrole (MAP) to 4-methoxy-2,2'-bipyrrole-5-carbaldehyde (MBC) to yield prodigiosin. It is able to use substrates with a variety of monocyclic rings in place of the pyrrolic ring A of its natural substrate. This is Prodigiosin synthesizing transferase PigC from Serratia marcescens.